Consider the following 510-residue polypeptide: Protein fork head (510 aa).

Disordered stretches follow at residues 1–62 and 175–205; these read MQKL…SPLA and AMPP…YRRS. A compositionally biased stretch (gly residues) spans 20–39; it reads SGGGGPPSGGGGGGGGGGGG. The span at 47–60 shows a compositional bias: low complexity; it reads NNPNPTSNGGSMSP. Phosphoserine occurs at positions 187 and 190. Residues 209–300 constitute a DNA-binding region (fork-head); the sequence is AKPPYSYISL…GNMFENGCYL (92 aa). Residues 309–359 form a disordered region; that stretch reads EKKEAIRQLHKSPSHSSLEATSPGKKDHEDSHHMHHHHHSRLDHHQHHKEA. Phosphoserine occurs at positions 320, 322, and 330. The span at 341 to 356 shows a compositional bias: basic residues; sequence HMHHHHHSRLDHHQHH.

The protein localises to the nucleus. In terms of biological role, fkh promotes terminal as opposed to segmental development. In the absence of fkh, this developmental switch does not occur. The nuclear localization of the fkh protein suggest that fkh regulates the transcription of other, subordinate, genes. This chain is Protein fork head (fkh), found in Drosophila melanogaster (Fruit fly).